A 180-amino-acid chain; its full sequence is Adenine phosphoribosyltransferase (180 aa).

Ser-2 carries the N-acetylserine modification. Phosphoserine occurs at positions 15 and 30. Tyr-60 is subject to Phosphotyrosine. A Phosphoserine modification is found at Ser-66. Lys-114 bears the N6-acetyllysine mark. Position 135 is a phosphothreonine (Thr-135).

It belongs to the purine/pyrimidine phosphoribosyltransferase family. As to quaternary structure, homodimer.

It localises to the cytoplasm. The enzyme catalyses AMP + diphosphate = 5-phospho-alpha-D-ribose 1-diphosphate + adenine. It participates in purine metabolism; AMP biosynthesis via salvage pathway; AMP from adenine: step 1/1. Functionally, catalyzes a salvage reaction resulting in the formation of AMP, that is energically less costly than de novo synthesis. The protein is Adenine phosphoribosyltransferase of Mastomys natalensis (African soft-furred rat).